Consider the following 292-residue polypeptide: MAKISAAQVKELRDKTGVGMMDAKKALVETEGDMEKAVDVLREKGVAKAEKKSGRVAAEGIAAVAIKDNKAAIVEINCETDSVASTDKFKNLVTEVADKIAEEEPASVDDALALKTANGTVKDDVIETTQVTGEKISLRRFQVVEKGADQSFGSYIHNGGQIAALVVLDGADSATAKDVAMHVAAINPEYVNREQVPADRLAHEKDVLVKEALNEGKPEKIVEKMVEGRLNKWLSEISLDDQEFVKDSDQTVAHFVESKGGKVSSFIRFEVGEGIEKKADNFIDEVMNQIKD.

The interval 80 to 83 (TDSV) is involved in Mg(2+) ion dislocation from EF-Tu.

This sequence belongs to the EF-Ts family.

The protein localises to the cytoplasm. Functionally, associates with the EF-Tu.GDP complex and induces the exchange of GDP to GTP. It remains bound to the aminoacyl-tRNA.EF-Tu.GTP complex up to the GTP hydrolysis stage on the ribosome. The protein is Elongation factor Ts of Lactiplantibacillus plantarum (strain ATCC BAA-793 / NCIMB 8826 / WCFS1) (Lactobacillus plantarum).